The following is a 252-amino-acid chain: Hydroxyacylglutathione hydrolase (252 aa).

Zn(2+) is bound by residues His54, His56, Asp58, His59, His111, Asp128, and His166.

It belongs to the metallo-beta-lactamase superfamily. Glyoxalase II family. Monomer. Zn(2+) is required as a cofactor.

The enzyme catalyses an S-(2-hydroxyacyl)glutathione + H2O = a 2-hydroxy carboxylate + glutathione + H(+). It participates in secondary metabolite metabolism; methylglyoxal degradation; (R)-lactate from methylglyoxal: step 2/2. Thiolesterase that catalyzes the hydrolysis of S-D-lactoyl-glutathione to form glutathione and D-lactic acid. In Vibrio cholerae serotype O1 (strain ATCC 39541 / Classical Ogawa 395 / O395), this protein is Hydroxyacylglutathione hydrolase.